The chain runs to 358 residues: F-box protein At4g35733 (358 aa).

Residues 4–51 (ATVWSDLPGELLDHIANGLFSKVELLRFRSICKTFRSAVDSDKNFLDH) form the F-box domain.

In terms of assembly, part of a SCF (ASK-cullin-F-box) protein ligase complex.

The protein operates within protein modification; protein ubiquitination. Functionally, component of SCF(ASK-cullin-F-box) E3 ubiquitin ligase complexes, which may mediate the ubiquitination and subsequent proteasomal degradation of target proteins. The protein is F-box protein At4g35733 of Arabidopsis thaliana (Mouse-ear cress).